The following is a 173-amino-acid chain: Alpha-crystallin A chain (173 aa).

Met-1 carries the N-acetylmethionine modification. Residues 1-63 form a required for complex formation with BFSP1 and BFSP2 region; it reads MDITIQHPWF…RTVLESGISE (63 aa). Gln-6 carries the post-translational modification Deamidated glutamine; partial. The residue at position 45 (Ser-45) is a Phosphoserine. Gln-50 is modified (deamidated glutamine; partial). The sHSP domain occupies 52 to 164; it reads LFRTVLESGI…SDRSIPVSRE (113 aa). The residue at position 99 (Lys-99) is an N6-acetyllysine. Zn(2+) contacts are provided by His-100, Glu-102, and His-107. Residue Ser-122 is modified to Phosphoserine. The residue at position 123 (Asn-123) is a Deamidated asparagine; partial. A disordered region spans residues 144 to 173; that stretch reads PKIHSNMESSHSDRSIPVSREEKPTLAPSS. A compositionally biased stretch (basic and acidic residues) spans 153–167; the sequence is SHSDRSIPVSREEKP. His-154 is a binding site for Zn(2+). O-linked (GlcNAc) serine glycosylation is present at Ser-162.

This sequence belongs to the small heat shock protein (HSP20) family. In terms of assembly, heteromer composed of three CRYAA and one CRYAB subunits. Inter-subunit bridging via zinc ions enhances stability, which is crucial as there is no protein turn over in the lens. Can also form homodimers and homotetramers (dimers of dimers) which serve as the building blocks of homooligomers. Within homooligomers, the zinc-binding motif is created from residues of 3 different molecules. His-100 and Glu-102 from one molecule are ligands of the zinc ion, and His-107 and His-154 residues from additional molecules complete the site with tetrahedral coordination geometry. Part of a complex required for lens intermediate filament formation composed of BFSP1, BFSP2 and CRYAA. Acetylation at Lys-99 may increase chaperone activity. Post-translationally, undergoes age-dependent proteolytical cleavage at the C-terminus.

The protein resides in the cytoplasm. It is found in the nucleus. Functionally, contributes to the transparency and refractive index of the lens. Acts as a chaperone, preventing aggregation of various proteins under a wide range of stress conditions. Required for the correct formation of lens intermediate filaments as part of a complex composed of BFSP1, BFSP2 and CRYAA. The protein is Alpha-crystallin A chain (CRYAA) of Didelphis virginiana (North American opossum).